A 146-amino-acid chain; its full sequence is Hemoglobin subunit beta-1 (146 aa).

A Globin domain is found at 2–146; that stretch reads HWTAEEKHLL…VAHALARRYH (145 aa). The heme b site is built by His-63 and His-92.

This sequence belongs to the globin family. As to quaternary structure, there are three forms of hemoglobin in Sphenodon: A, A' and D. Hb A is a tetramer of two alpha-A and two beta-1, Hb A' is a tetramer of two alpha-a and two beta-2, Hb D is a tetramer of two alpha-D and two beta-2.

In terms of biological role, involved in oxygen transport from the lung to the various peripheral tissues. The sequence is that of Hemoglobin subunit beta-1 (HBB1) from Sphenodon punctatus (Tuatara).